Reading from the N-terminus, the 478-residue chain is Protein nucleotidyltransferase YdiU (478 aa).

Positions 84, 86, 87, 107, 119, 120, 170, and 177 each coordinate ATP. Residue Asp-246 is the Proton acceptor of the active site. Mg(2+)-binding residues include Asn-247 and Asp-256. Residue Asp-256 coordinates ATP.

The protein belongs to the SELO family. The cofactor is Mg(2+). Requires Mn(2+) as cofactor.

The catalysed reaction is L-seryl-[protein] + ATP = 3-O-(5'-adenylyl)-L-seryl-[protein] + diphosphate. The enzyme catalyses L-threonyl-[protein] + ATP = 3-O-(5'-adenylyl)-L-threonyl-[protein] + diphosphate. It carries out the reaction L-tyrosyl-[protein] + ATP = O-(5'-adenylyl)-L-tyrosyl-[protein] + diphosphate. It catalyses the reaction L-histidyl-[protein] + UTP = N(tele)-(5'-uridylyl)-L-histidyl-[protein] + diphosphate. The catalysed reaction is L-seryl-[protein] + UTP = O-(5'-uridylyl)-L-seryl-[protein] + diphosphate. The enzyme catalyses L-tyrosyl-[protein] + UTP = O-(5'-uridylyl)-L-tyrosyl-[protein] + diphosphate. Functionally, nucleotidyltransferase involved in the post-translational modification of proteins. It can catalyze the addition of adenosine monophosphate (AMP) or uridine monophosphate (UMP) to a protein, resulting in modifications known as AMPylation and UMPylation. This is Protein nucleotidyltransferase YdiU from Escherichia coli (strain K12 / MC4100 / BW2952).